The following is a 207-amino-acid chain: MEELLKELERIREEAKPLVEQRFEEFKRLGEEGTEEDLFCELSFCVLTANWSAEGGIRAQKEIGKGFVHLPLEELAEKLREVGHRYPQKRAEFIVENRKLLGKLKNLVKGDPFQSREFLVRNAKGIGWKEASHFLRNTGVEDLAILDKHVLRLMKRHGLIQEIPKGWSKKRYLYVEEILRKVAEAFGESPGKFDLYLWYLVKGKVDK.

Active-site residues include lysine 129 and aspartate 147.

This sequence belongs to the type-2 OGG1 family.

It catalyses the reaction 2'-deoxyribonucleotide-(2'-deoxyribose 5'-phosphate)-2'-deoxyribonucleotide-DNA = a 3'-end 2'-deoxyribonucleotide-(2,3-dehydro-2,3-deoxyribose 5'-phosphate)-DNA + a 5'-end 5'-phospho-2'-deoxyribonucleoside-DNA + H(+). Its function is as follows. Catalyzes the excision of an oxidatively damaged form of guanine (7,8-dihydro-8-oxoguanine = 8-oxoG) from DNA. Also cleaves the DNA backbone at apurinic/apyrimidinic sites (AP sites). This is 8-oxoguanine DNA glycosylase/AP lyase from Thermotoga maritima (strain ATCC 43589 / DSM 3109 / JCM 10099 / NBRC 100826 / MSB8).